The sequence spans 233 residues: Glucosamine-6-phosphate deaminase (233 aa).

D62 acts as the Proton acceptor; for enolization step in catalysis. N128 serves as the catalytic For ring-opening step. H130 functions as the Proton acceptor; for ring-opening step in the catalytic mechanism. The active-site For ring-opening step is the E135.

Belongs to the glucosamine/galactosamine-6-phosphate isomerase family. NagB subfamily.

It carries out the reaction alpha-D-glucosamine 6-phosphate + H2O = beta-D-fructose 6-phosphate + NH4(+). Its pathway is amino-sugar metabolism; N-acetylneuraminate degradation; D-fructose 6-phosphate from N-acetylneuraminate: step 5/5. Catalyzes the reversible isomerization-deamination of glucosamine 6-phosphate (GlcN6P) to form fructose 6-phosphate (Fru6P) and ammonium ion. In Streptococcus pneumoniae serotype 4 (strain ATCC BAA-334 / TIGR4), this protein is Glucosamine-6-phosphate deaminase.